Consider the following 244-residue polypeptide: Homeobox-leucine zipper protein HOX14 (244 aa).

The disordered stretch occupies residues 25-64; the sequence is ASGEVQGERPRARRRRRRGARCVGGGGGGGEVDGGDPKKR. A compositionally biased stretch (basic residues) spans 35–44; that stretch reads RARRRRRRGA. Positions 46-56 are enriched in gly residues; sequence CVGGGGGGGEV. The segment at residues 59–118 is a DNA-binding region (homeobox); the sequence is GDPKKRRLSDEQVEMLELSFREERKLETGRKVHLASELGLDPKQVAVWFQNRRARHKSKL. The stretch at 108 to 167 forms a coiled coil; it reads QNRRARHKSKLLEEEFSKLKHAHDAAILHKCHLENEVLRLKERLVVAEEEVRRLRSAAGS.

It belongs to the HD-ZIP homeobox family. Class I subfamily. In terms of tissue distribution, expressed in roots, stems, leaf blades and panicles.

The protein resides in the nucleus. Its function is as follows. Probable transcription factor. In Oryza sativa subsp. indica (Rice), this protein is Homeobox-leucine zipper protein HOX14 (HOX14).